A 107-amino-acid chain; its full sequence is Pre-mRNA-splicing factor RDS3 (107 aa).

Belongs to the PHF5 family. As to quaternary structure, component of the spliceosome where it interacts with CUS1, HSH49, HSH155, IST3 and RSE1. Also interacts with YRA1.

It is found in the nucleus. Its function is as follows. Required for pre-mRNA splicing. Involved in regulation of drug sensitivity and may play a role in multidrug resistance. The protein is Pre-mRNA-splicing factor RDS3 (RDS3) of Saccharomyces cerevisiae (strain ATCC 204508 / S288c) (Baker's yeast).